The chain runs to 186 residues: Adenine phosphoribosyltransferase (186 aa).

The protein belongs to the purine/pyrimidine phosphoribosyltransferase family. In terms of assembly, homodimer.

It localises to the cytoplasm. The catalysed reaction is AMP + diphosphate = 5-phospho-alpha-D-ribose 1-diphosphate + adenine. It participates in purine metabolism; AMP biosynthesis via salvage pathway; AMP from adenine: step 1/1. Functionally, catalyzes a salvage reaction resulting in the formation of AMP, that is energically less costly than de novo synthesis. The protein is Adenine phosphoribosyltransferase of Xanthomonas oryzae pv. oryzae (strain PXO99A).